The sequence spans 204 residues: MISAEMVKELRERTGAGMMDCKKALEDANGDMEKAIELLRERGLAKAAKRASRVAAEGIVESYIHGNGRIGVLVEINCETDFVARNEEFRQFAKDIAMQIAAANPKYVSREEIPQEVIEREKAILRQQALNEGKPENVVDRIIEGRLEKFFEEVCLLEQPWIKNPDMKIKDLLTEKIAKIGENIVIRRFARFERGEGIEKAASC.

An involved in Mg(2+) ion dislocation from EF-Tu region spans residues 80–83 (TDFV).

Belongs to the EF-Ts family.

Its subcellular location is the cytoplasm. Functionally, associates with the EF-Tu.GDP complex and induces the exchange of GDP to GTP. It remains bound to the aminoacyl-tRNA.EF-Tu.GTP complex up to the GTP hydrolysis stage on the ribosome. This is Elongation factor Ts from Caldicellulosiruptor saccharolyticus (strain ATCC 43494 / DSM 8903 / Tp8T 6331).